A 260-amino-acid chain; its full sequence is Homeobox protein CDX-1 (260 aa).

A DNA-binding region (homeobox) is located at residues 149–208; the sequence is KDKYRVVYTDHQRLELEKEFHYSRYITIRRKAELAAALGLTERQVKIWFQNRRAKERKVN. The interaction with DNA stretch occupies residues 152–173; sequence YRVVYTDHQRLELEKEFHYSRY. The segment at 191-202 is interaction with 5-mCpG DNA; that stretch reads RQVKIWFQNRRA. The segment at 204–260 is disordered; that stretch reads ERKVNKKKLQQQSQPTSTTTPTPPAVGTPGPMGTLCSGSAPSLVSSSPLTIKEEFMP. 2 stretches are compositionally biased toward low complexity: residues 213–223 and 240–252; these read QQQSQPTSTTT and SGSA…SSPL.

This sequence belongs to the Caudal homeobox family.

Its subcellular location is the nucleus. In terms of biological role, plays a role in transcriptional regulation. Involved in activated KRAS-mediated transcriptional activation of PRKD1. Binds to the PRKD1 promoter. Could play a role in the terminal differentiation of the intestine. Binds preferentially to methylated DNA. The chain is Homeobox protein CDX-1 (CDX1) from Gallus gallus (Chicken).